We begin with the raw amino-acid sequence, 105 residues long: Met repressor (105 aa).

Belongs to the MetJ family. In terms of assembly, homodimer.

The protein localises to the cytoplasm. Its function is as follows. This regulatory protein, when combined with SAM (S-adenosylmethionine) represses the expression of the methionine regulon and of enzymes involved in SAM synthesis. The chain is Met repressor from Pasteurella multocida (strain Pm70).